Here is a 365-residue protein sequence, read N- to C-terminus: MSGNTIGKLFTITTAGESHGEALIGIVDGCPPGLALTEVDLQDDLDLRKPGTSRHTSQRHEEDLVKILSGTFEGKTTGTPIALIIQNTDQRSKDYGNIKDTFRPGHADYTYHQKYGIRDYRGGGRSSARETAMRVACGGIAKKYLKQEYNIKIKGYLSQLGPIKIENSDWLEVHNNPFFCLDANKVKILEKYMDTLRKSGDSVGARINIIVNNMPVGLGEPIFDRLDADIAHSMMSINAVKGVEIGDGFRVVNQKGTEHRDAITLTGFKSNHAGGIFGGISSGQDILVSIALKPTSSLSLPIESIDKRGGPIEVITKGRHDPCVGIRATPIAEAMLAITIMDHVMRHRAQNLNIESITPIIPASI.

Arg-48 and Arg-54 together coordinate NADP(+). FMN contacts are provided by residues 125 to 127, 238 to 239, Gly-278, 293 to 297, and Arg-319; these read RSS, NA, and KPTSS.

It belongs to the chorismate synthase family. In terms of assembly, homotetramer. FMNH2 serves as cofactor.

It carries out the reaction 5-O-(1-carboxyvinyl)-3-phosphoshikimate = chorismate + phosphate. It functions in the pathway metabolic intermediate biosynthesis; chorismate biosynthesis; chorismate from D-erythrose 4-phosphate and phosphoenolpyruvate: step 7/7. Catalyzes the anti-1,4-elimination of the C-3 phosphate and the C-6 proR hydrogen from 5-enolpyruvylshikimate-3-phosphate (EPSP) to yield chorismate, which is the branch point compound that serves as the starting substrate for the three terminal pathways of aromatic amino acid biosynthesis. This reaction introduces a second double bond into the aromatic ring system. The protein is Chorismate synthase of Vesicomyosocius okutanii subsp. Calyptogena okutanii (strain HA).